A 206-amino-acid chain; its full sequence is Dephospho-CoA kinase (206 aa).

The DPCK domain maps to 4–200 (IVALTGGIGS…AYYLQLASQF (197 aa)). ATP is bound at residue 12–17 (GSGKST).

Belongs to the CoaE family.

The protein localises to the cytoplasm. It carries out the reaction 3'-dephospho-CoA + ATP = ADP + CoA + H(+). It functions in the pathway cofactor biosynthesis; coenzyme A biosynthesis; CoA from (R)-pantothenate: step 5/5. Functionally, catalyzes the phosphorylation of the 3'-hydroxyl group of dephosphocoenzyme A to form coenzyme A. This is Dephospho-CoA kinase from Escherichia coli O6:H1 (strain CFT073 / ATCC 700928 / UPEC).